The sequence spans 371 residues: Methionine import ATP-binding protein MetN (371 aa).

The tract at residues 1-22 (MSEPFMNAPWQPPGDHPALKSP) is disordered. In terms of domain architecture, ABC transporter spans 27–268 (ILIDSVRKLY…PRHEVTRRFV (242 aa)). 65 to 72 (GRSGAGKS) contributes to the ATP binding site.

This sequence belongs to the ABC transporter superfamily. Methionine importer (TC 3.A.1.24) family. The complex is composed of two ATP-binding proteins (MetN), two transmembrane proteins (MetI) and a solute-binding protein (MetQ).

It localises to the cell inner membrane. It carries out the reaction L-methionine(out) + ATP + H2O = L-methionine(in) + ADP + phosphate + H(+). The catalysed reaction is D-methionine(out) + ATP + H2O = D-methionine(in) + ADP + phosphate + H(+). Functionally, part of the ABC transporter complex MetNIQ involved in methionine import. Responsible for energy coupling to the transport system. The sequence is that of Methionine import ATP-binding protein MetN from Rhodopseudomonas palustris (strain BisB5).